The sequence spans 277 residues: Multiple sugar-binding transport system permease protein MsmG (277 aa).

6 helical membrane-spanning segments follow: residues 13–33 (YVLLTVGGILILIPLMVTVFS), 74–94 (VITVLSVLVVMLFIPAAAYSI), 110–130 (LLILGIFVPFQVIMIPITVMM), 141–161 (LIILYLTYAIPQTLFLYVGYI), 198–218 (TTLIINALWFWNDFMLPLLIL), and 243–263 (GPSFASYIVGIITITIVYLIF). The ABC transmembrane type-1 domain maps to 69-263 (FWNSTVITVL…ITITIVYLIF (195 aa)).

This sequence belongs to the binding-protein-dependent transport system permease family. MalFG subfamily.

The protein localises to the cell membrane. Functionally, involved in a binding protein-dependent transport system responsible for the uptake of melibiose, raffinose and isomaltotriose. The polypeptide is Multiple sugar-binding transport system permease protein MsmG (msmG) (Streptococcus mutans serotype c (strain ATCC 700610 / UA159)).